We begin with the raw amino-acid sequence, 701 residues long: Cytosolic endo-beta-N-acetylglucosaminidase 2 (701 aa).

Belongs to the glycosyl hydrolase 85 family.

It is found in the cytoplasm. The protein localises to the cytosol. It carries out the reaction an N(4)-(oligosaccharide-(1-&gt;3)-[oligosaccharide-(1-&gt;6)]-beta-D-Man-(1-&gt;4)-beta-D-GlcNAc-(1-&gt;4)-alpha-D-GlcNAc)-L-asparaginyl-[protein] + H2O = an oligosaccharide-(1-&gt;3)-[oligosaccharide-(1-&gt;6)]-beta-D-Man-(1-&gt;4)-D-GlcNAc + N(4)-(N-acetyl-beta-D-glucosaminyl)-L-asparaginyl-[protein]. Endoglycosidase that releases N-glycans from glycoproteins by cleaving the beta-1,4-glycosidic bond in the N,N'-diacetylchitobiose core. Involved in the production of high-mannose type N-glycans during plant development and fruit maturation. The sequence is that of Cytosolic endo-beta-N-acetylglucosaminidase 2 from Arabidopsis thaliana (Mouse-ear cress).